The following is a 283-amino-acid chain: Bifunctional protein FolD 2 (283 aa).

Residues 165 to 167, Thr192, and Val233 each bind NADP(+); that span reads GRG.

The protein belongs to the tetrahydrofolate dehydrogenase/cyclohydrolase family. In terms of assembly, homodimer.

The catalysed reaction is (6R)-5,10-methylene-5,6,7,8-tetrahydrofolate + NADP(+) = (6R)-5,10-methenyltetrahydrofolate + NADPH. It carries out the reaction (6R)-5,10-methenyltetrahydrofolate + H2O = (6R)-10-formyltetrahydrofolate + H(+). It participates in one-carbon metabolism; tetrahydrofolate interconversion. In terms of biological role, catalyzes the oxidation of 5,10-methylenetetrahydrofolate to 5,10-methenyltetrahydrofolate and then the hydrolysis of 5,10-methenyltetrahydrofolate to 10-formyltetrahydrofolate. This chain is Bifunctional protein FolD 2, found in Nocardioides sp. (strain ATCC BAA-499 / JS614).